The primary structure comprises 298 residues: Glycine--tRNA ligase alpha subunit (298 aa).

This sequence belongs to the class-II aminoacyl-tRNA synthetase family. Tetramer of two alpha and two beta subunits.

The protein resides in the cytoplasm. It carries out the reaction tRNA(Gly) + glycine + ATP = glycyl-tRNA(Gly) + AMP + diphosphate. This Helicobacter pylori (strain HPAG1) protein is Glycine--tRNA ligase alpha subunit.